Consider the following 218-residue polypeptide: ETS domain-containing protein ets-7 (218 aa).

Positions 12 to 93 (QRLLNFLRGL…KGKDSRYCFL (82 aa)) form a DNA-binding region, ETS. Over residues 131 to 161 (TSNFSLQSSPSSSSNSSSARTMSATSSPTSS) the composition is skewed to low complexity. Positions 131–162 (TSNFSLQSSPSSSSNSSSARTMSATSSPTSSL) are disordered.

This sequence belongs to the ETS family.

The protein localises to the nucleus. Its function is as follows. Probable transcription factor. Involved in responses to oxidative stress. This chain is ETS domain-containing protein ets-7, found in Caenorhabditis elegans.